Here is a 751-residue protein sequence, read N- to C-terminus: Nibrin (751 aa).

Residues 24 to 83 (YVVGRKNCGILIENDQSISRNHAVLTVNFPVTSLSQTDEIPTLTIKDNSKYGTFVNEEKM) form the FHA domain. BRCT domains are found at residues 105–181 (KFRV…SEFL) and 224–315 (GKTF…LAVI). The segment at 111-328 (EPLVVCSSCL…TENYCNPQGQ (218 aa)) is mediates interaction with SP100. The tract at residues 221–403 (IFKGKTFVFL…SRKLSQETFN (183 aa)) is interaction with MTOR, MAPKAP1 and RICTOR. Thr337 bears the Phosphothreonine mark. Ser343 carries the phosphoserine; by ATM modification. 2 positions are modified to phosphoserine: Ser347 and Ser398. The segment at 389 to 418 (GLEQSSRKLSQETFNIKEAPKPSSKANNVA) is disordered. Ser433 is modified (phosphoserine; by CDK2). A Glycyl lysine isopeptide (Lys-Gly) (interchain with G-Cter in ubiquitin) cross-link involves residue Lys436. 2 disordered regions span residues 444–479 (KDWTSQQQQNSIKNYFQPCTRKRERDEDNPELSSCK) and 491–550 (EQTQ…RKRK). Residues 446 to 457 (WTSQQQQNSIKN) show a composition bias toward polar residues. The Nuclear localization signal motif lies at 461-467 (PCTRKRE). 2 stretches are compositionally biased toward basic and acidic residues: residues 502–518 (KSKEHQSQNATLDREAD) and 528–539 (ELNRKSPDRKPL). Ser508 bears the Phosphoserine mark. Residues Lys569 and Lys580 each participate in a glycyl lysine isopeptide (Lys-Gly) (interchain with G-Cter in SUMO2) cross-link. The disordered stretch occupies residues 576–645 (VKVEKQEADD…ANSDGLQDSS (70 aa)). Composition is skewed to basic and acidic residues over residues 577-599 (KVEKQEADDTIRKKPRMDAERNR) and 615-636 (EDEREKKDELQTESWSTKHEIA). Residues Lys684, Lys688, and Lys733 each participate in a glycyl lysine isopeptide (Lys-Gly) (interchain with G-Cter in ubiquitin) cross-link. A compositionally biased stretch (basic and acidic residues) spans 731–742 (QAKEESLADDLF). The tract at residues 731-751 (QAKEESLADDLFRYNPNVKRR) is disordered. Positions 738-747 (ADDLFRYNPN) match the FxF/Y motif motif.

This sequence belongs to the Nibrin family. As to quaternary structure, component of the MRN complex composed of two heterodimers RAD50 and MRE11 associated with a single NBN. The MRN complexes dimerize on DNA to form joined MRN-MRN oligomers required for DNA double-strand break repair. As part of the MRN complex, interacts with MCM9; the interaction recruits the complex to DNA repair sites. Component of the BASC complex, at least composed of BRCA1, MSH2, MSH6, MLH1, ATM, BLM, RAD50, MRE11 and NBN. Interacts with histone H2AX; this requires phosphorylation of H2AX on 'Ser-139' and promotes NBN recruitment to DNA damage sites. Interacts with (phosphorylated) MDC1; promoting NBN recruitment to DNA damage sites. Interacts with (phosphorylated) RAD17; promoting NBN recruitment to DNA damage sites. Interacts (via FxF/Y motif) with ATM. Interacts with HJURP. Interacts with INTS3. Interacts with KPNA2. Interacts with TERF2; interaction is disrupted upon NBN phosphorylation by CDK2. Interacts with (phosphorylated) RBBP8/CtIP; the interaction links the role of the MRN complex in DNA double-strand break sensing to resection. Interacts with SP100; recruits NBN to PML bodies. Interacts with ATF2. Interacts with MTOR, MAPKAP1 isoform 2 and RICTOR; indicative for an association with the mTORC2 complex. Interacts with MRNIP. Interacts with UFL1; promoting UFL1 recruitment to double-strand breaks following DNA damage. Interacts with CYREN (via XLF motif). Post-translationally, ubiquitinated at Lys-436 via 'Lys-6'-linked ubiquitin chains by RNF8, promoting NBN recruitment to DNA double-strand breaks (DSBs). Ubiquitinated at Lys-684 and Lys-688 via 'Lys-63'-linked ubiquitin chains by PELI1: ubiquitination takes place following PELI1 phosphorylation and promotes ATM activation and DNA repair. Ubiquitinated at Lys-733 via 'Lys-63'-linked ubiquitin chains by the SCF(SKP2) complex: ubiquitination takes place following SKP2 phosphorylation and promotes ATM activation and DNA repair. In terms of processing, phosphorylated by ATM in response of ionizing radiation, and such phosphorylation is responsible intra-S phase checkpoint control and telomere maintenance. Phosphorylated at Ser-433 by CDK2 in S/G2 phases abolishes interaction with TERF2, enabling DCLRE1B/Apollo recruitment to telomeres. Phosphorylation at Ser-433 in response to dysfunctional telomeres promotes non-homologous end joining repair at telomeres, while dephosphorylation by PPP1CA promotes microhomology-mediated end-joining (MMEJ) repair. In terms of tissue distribution, high expression in the liver, heart and testis. Low expression in all other tissues analyzed. In the cerebellum the postmitotic Purkinje cells are marked specifically.

It localises to the nucleus. The protein resides in the chromosome. It is found in the PML body. Its subcellular location is the telomere. Component of the MRN complex, which plays a central role in double-strand break (DSB) repair, DNA recombination, maintenance of telomere integrity and meiosis. The MRN complex is involved in the repair of DNA double-strand breaks (DSBs) via homologous recombination (HR), an error-free mechanism which primarily occurs during S and G2 phases. The complex (1) mediates the end resection of damaged DNA, which generates proper single-stranded DNA, a key initial steps in HR, and is (2) required for the recruitment of other repair factors and efficient activation of ATM and ATR upon DNA damage. The MRN complex possesses single-strand endonuclease activity and double-strand-specific 3'-5' exonuclease activity, which are provided by MRE11, to initiate end resection, which is required for single-strand invasion and recombination. Within the MRN complex, NBN acts as a protein-protein adapter, which specifically recognizes and binds phosphorylated proteins, promoting their recruitment to DNA damage sites. Recruits MRE11 and RAD50 components of the MRN complex to DSBs in response to DNA damage. Promotes the recruitment of PI3/PI4-kinase family members ATM, ATR, and probably DNA-PKcs to the DNA damage sites, activating their functions. Mediates the recruitment of phosphorylated RBBP8/CtIP to DSBs, leading to cooperation between the MRN complex and RBBP8/CtIP to initiate end resection. RBBP8/CtIP specifically promotes the endonuclease activity of the MRN complex to clear DNA ends containing protein adducts. The MRN complex is also required for the processing of R-loops. NBN also functions in telomere length maintenance via its interaction with TERF2: interaction with TERF2 during G1 phase preventing recruitment of DCLRE1B/Apollo to telomeres. NBN also promotes DNA repair choice at dysfunctional telomeres: NBN phosphorylation by CDK2 promotes non-homologous end joining repair at telomeres, while unphosphorylated NBN promotes microhomology-mediated end-joining (MMEJ) repair. Enhances AKT1 phosphorylation possibly by association with the mTORC2 complex. The polypeptide is Nibrin (Mus musculus (Mouse)).